A 79-amino-acid polypeptide reads, in one-letter code: Conotoxin PnMSGL-03 (79 aa).

Residues 1–20 (MSRLGIMVLTLLLLVFIVTS) form the signal peptide. Positions 21-44 (HQDAGEKQATQRDAINFRWRRSLI) are excised as a propeptide. 3 cysteine pairs are disulfide-bonded: C52/C64, C56/C73, and C63/C77. Position 78 is a leucine amide (L78).

This sequence belongs to the conotoxin O3 superfamily. In terms of tissue distribution, expressed by the venom duct.

It is found in the secreted. The protein is Conotoxin PnMSGL-03 of Conus pennaceus (Feathered cone).